Here is a 142-residue protein sequence, read N- to C-terminus: Large ribosomal subunit protein mL42 (142 aa).

Residues 1-32 (MAVAAVKWVMSKRTILKHLFPVQNGALYCVCH) constitute a mitochondrion transit peptide.

This sequence belongs to the mitochondrion-specific ribosomal protein mL42 family. In terms of assembly, component of the mitochondrial large ribosomal subunit (mt-LSU). Mature mammalian 55S mitochondrial ribosomes consist of a small (28S) and a large (39S) subunit. The 28S small subunit contains a 12S ribosomal RNA (12S mt-rRNA) and 30 different proteins. The 39S large subunit contains a 16S rRNA (16S mt-rRNA), a copy of mitochondrial valine transfer RNA (mt-tRNA(Val)), which plays an integral structural role, and 52 different proteins.

It is found in the mitochondrion. In Homo sapiens (Human), this protein is Large ribosomal subunit protein mL42 (MRPL42).